A 247-amino-acid polypeptide reads, in one-letter code: Probable transcriptional regulatory protein GM21_0933 (247 aa).

The protein belongs to the TACO1 family.

The protein resides in the cytoplasm. The polypeptide is Probable transcriptional regulatory protein GM21_0933 (Geobacter sp. (strain M21)).